The primary structure comprises 569 residues: Urease subunit alpha (569 aa).

A Urease domain is found at 131–569; that stretch reads GAIDSHIHFI…LPLAQRYLLL (439 aa). His136, His138, and Lys219 together coordinate Ni(2+). An N6-carboxylysine modification is found at Lys219. His221 contacts substrate. 2 residues coordinate Ni(2+): His248 and His274. The active-site Proton donor is the His322. Asp362 contacts Ni(2+).

This sequence belongs to the metallo-dependent hydrolases superfamily. Urease alpha subunit family. Heterotrimer of UreA (gamma), UreB (beta) and UreC (alpha) subunits. Three heterotrimers associate to form the active enzyme. Requires Ni cation as cofactor. In terms of processing, carboxylation allows a single lysine to coordinate two nickel ions.

It is found in the cytoplasm. It carries out the reaction urea + 2 H2O + H(+) = hydrogencarbonate + 2 NH4(+). The protein operates within nitrogen metabolism; urea degradation; CO(2) and NH(3) from urea (urease route): step 1/1. In Prochlorococcus marinus (strain NATL1A), this protein is Urease subunit alpha.